The chain runs to 567 residues: Alpha-glucosidase (567 aa).

An N-terminal signal peptide occupies residues 1–17 (MKAVIVFCLMALSIVDA). Residues asparagine 88 and asparagine 123 are each glycosylated (N-linked (GlcNAc...) asparagine). The Nucleophile role is filled by aspartate 223. Asparagine 247 carries N-linked (GlcNAc...) asparagine glycosylation. Glutamate 286 acts as the Proton donor in catalysis. Asparagine 290, asparagine 313, asparagine 319, asparagine 499, and asparagine 507 each carry an N-linked (GlcNAc...) asparagine glycan.

As to quaternary structure, monomer. In terms of tissue distribution, expressed specifically in the hypopharyngeal glands of worker bees. Also found in the brain of worker bees (at protein level).

It catalyses the reaction Hydrolysis of terminal, non-reducing (1-&gt;4)-linked alpha-D-glucose residues with release of alpha-D-glucose.. In terms of biological role, converts sucrose in nectar to glucose and fructose. The chain is Alpha-glucosidase from Apis mellifera (Honeybee).